Reading from the N-terminus, the 515-residue chain is Membrane-bound transcription factor site-2 protease (515 aa).

Topologically, residues 1–3 (MIP) are cytoplasmic. Residues 4 to 24 (VSLLVVVVGGWTAVYLADLVL) traverse the membrane as a helical segment. The Lumenal segment spans residues 25 to 74 (KSSVYFKHSYEDWLENNGLSISPFHIRWQTSIFNRAFYSWGRRKARMLYQ). 2 consecutive transmembrane segments (helical) span residues 75–95 (WFNF…FLLG) and 96–107 (KTLMQTLAQMMA). Over 108-140 (DSPSPYSSSSSSSSSSSSSSSSSSSLHNEQVLQ) the chain is Lumenal. A helical membrane pass occupies residues 141–165 (VVVPGINLPVNQLTYFFAAVLISGV). His-167 contributes to the Zn(2+) binding site. Glu-168 is a catalytic residue. The next 3 helical transmembrane spans lie at 170–182 (GHGI…QVRF), 183–205 (NGFG…TTHL), and 225–247 (FVLA…PFYY). His-171 is a Zn(2+) binding site. The Lumenal segment spans residues 248–442 (TGVGVLITEV…LPVIVETFVK (195 aa)). Asn-333 carries N-linked (GlcNAc...) asparagine glycosylation. Transmembrane regions (helical) follow at residues 443–460 (YLIS…VPCF) and 461–472 (ALDGQWILNSFL). At 473–488 (DATLTSVIGDNDVKDL) the chain is on the lumenal side. A helical transmembrane segment spans residues 489–509 (IGFFILLGGSVLLAANVTLGL). The Cytoplasmic portion of the chain corresponds to 510 to 515 (WMVTAR).

The protein belongs to the peptidase M50A family. Requires Zn(2+) as cofactor.

It is found in the membrane. The protein resides in the cytoplasm. It localises to the golgi apparatus membrane. The catalysed reaction is Cleaves several transcription factors that are type-2 transmembrane proteins within membrane-spanning domains. Known substrates include sterol regulatory element-binding protein (SREBP) -1, SREBP-2 and forms of the transcriptional activator ATF6. SREBP-2 is cleaved at the site 477-DRSRILL-|-CVLTFLCLSFNPLTSLLQWGGA-505. The residues Asn-Pro, 11 residues distal to the site of cleavage in the membrane-spanning domain, are important for cleavage by S2P endopeptidase. Replacement of either of these residues does not prevent cleavage, but there is no cleavage if both of these residues are replaced.. Its function is as follows. Zinc metalloprotease that mediates intramembrane proteolysis of proteins such as ATF6, ATF6B, SREBF1/SREBP1 and SREBF2/SREBP2. Catalyzes the second step in the proteolytic activation of the sterol regulatory element-binding proteins (SREBPs) SREBF1/SREBP1 and SREBF2/SREBP2: cleaves SREBPs within the first transmembrane segment, thereby releasing the N-terminal segment with a portion of the transmembrane segment attached. Mature N-terminal SREBP fragments shuttle to the nucleus and activate gene transcription. Also mediates the second step in the proteolytic activation of the cyclic AMP-dependent transcription factor ATF-6 (ATF6 and ATF6B). Involved in intramembrane proteolysis during bone formation. In astrocytes and osteoblasts, upon DNA damage and ER stress, mediates the second step of the regulated intramembrane proteolytic activation of the transcription factor CREB3L1, leading to the inhibition of cell-cycle progression. The chain is Membrane-bound transcription factor site-2 protease (Mbtps2) from Mus musculus (Mouse).